Consider the following 129-residue polypeptide: UPF0102 protein Clim_0016 (129 aa).

It belongs to the UPF0102 family.

This Chlorobium limicola (strain DSM 245 / NBRC 103803 / 6330) protein is UPF0102 protein Clim_0016.